The primary structure comprises 569 residues: Glutamine--tRNA ligase (569 aa).

The disordered stretch occupies residues 1 to 23 (MSKDPMSKPTPEPAAHSKAGPAV). A 'HIGH' region motif is present at residues 50–60 (PEPNGYLHIGH). ATP is bound by residues 51–53 (EPN) and 57–63 (HIGHAKS). L-glutamine is bound by residues Asp83 and Tyr228. ATP contacts are provided by residues Thr247 and 277–278 (RL). Positions 284–288 (ITSKR) match the 'KMSKS' region motif.

The protein belongs to the class-I aminoacyl-tRNA synthetase family. In terms of assembly, monomer.

It localises to the cytoplasm. The catalysed reaction is tRNA(Gln) + L-glutamine + ATP = L-glutaminyl-tRNA(Gln) + AMP + diphosphate. This Pseudomonas syringae pv. tomato (strain ATCC BAA-871 / DC3000) protein is Glutamine--tRNA ligase.